The primary structure comprises 179 residues: Bacterioferritin (179 aa).

Positions 1 to 150 (MAGNREDRKA…NIGSHIKNLG (150 aa)) constitute a Ferritin-like diiron domain. Fe cation-binding residues include E23 and E56. Residue M57 participates in Fe-coproporphyrin III binding. Residues H59, E99, E132, and H135 each contribute to the Fe cation site.

It belongs to the bacterioferritin family. As to quaternary structure, homooligomer of 24 subunits, arranged as 12 dimers, that are packed together to form an approximately spherical molecule with a central cavity, in which large amounts of iron can be deposited. Fe-coproporphyrin III is required as a cofactor. Fe cation serves as cofactor.

The enzyme catalyses 4 Fe(2+) + O2 + 4 H(+) = 4 Fe(3+) + 2 H2O. It catalyses the reaction Fe(2+)(in) = Fe(2+)(out). Iron-storage protein, whose ferroxidase center binds Fe(2+), oxidizes it using dioxygen to Fe(3+), and participates in the subsequent Fe(3+) oxide mineral core formation within the central cavity of the BFR protein shell. The protein is Bacterioferritin (bfr) of Desulfovibrio desulfuricans (strain ATCC 27774 / DSM 6949 / MB).